Consider the following 365-residue polypeptide: Chorismate synthase (365 aa).

Residues Arg48 and Arg54 each coordinate NADP(+). FMN is bound by residues 125 to 127 (RSS), 238 to 239 (NA), Gly278, 293 to 297 (KPTSS), and Arg319.

The protein belongs to the chorismate synthase family. Homotetramer. It depends on FMNH2 as a cofactor.

The enzyme catalyses 5-O-(1-carboxyvinyl)-3-phosphoshikimate = chorismate + phosphate. It functions in the pathway metabolic intermediate biosynthesis; chorismate biosynthesis; chorismate from D-erythrose 4-phosphate and phosphoenolpyruvate: step 7/7. Functionally, catalyzes the anti-1,4-elimination of the C-3 phosphate and the C-6 proR hydrogen from 5-enolpyruvylshikimate-3-phosphate (EPSP) to yield chorismate, which is the branch point compound that serves as the starting substrate for the three terminal pathways of aromatic amino acid biosynthesis. This reaction introduces a second double bond into the aromatic ring system. This is Chorismate synthase from Alteromonas mediterranea (strain DSM 17117 / CIP 110805 / LMG 28347 / Deep ecotype).